The following is a 294-amino-acid chain: Sperm acrosome membrane-associated protein 1 (294 aa).

The signal sequence occupies residues 1–29; the sequence is MSPRGTGCSAGLLMTVGWLLLAGLQSARG. Residues 30 to 221 are Extracellular-facing; that stretch reads TNVTAAVQDA…LPATDAALIF (192 aa). N-linked (GlcNAc...) asparagine glycosylation is present at Asn31. The tract at residues 42–70 is disordered; the sequence is AHEGEGEEETENNDSETAENYAPPETEDV. Residues 46–58 are compositionally biased toward acidic residues; that stretch reads EGEEETENNDSET. Residues 222 to 242 traverse the membrane as a helical segment; that stretch reads VLTIGVIICVFIIFLLIFIII. At 243 to 294 the chain is on the cytoplasmic side; the sequence is NWAAVKAFWGAKASTPEVQSEQSSVRYKDSTSLDQLPTEMPGEDDALSEWNE. Ser256 bears the Phosphoserine mark. Over residues 258-267 the composition is skewed to polar residues; sequence PEVQSEQSSV. Positions 258-294 are disordered; sequence PEVQSEQSSVRYKDSTSLDQLPTEMPGEDDALSEWNE. Phosphotyrosine is present on Tyr269. Residues 283-294 show a composition bias toward acidic residues; the sequence is PGEDDALSEWNE. Position 290 is a phosphoserine (Ser290).

As to quaternary structure, interacts with CYLC1; the interaction may be relevant for proper acrosome attachment to the nuclear envelope. In terms of processing, N-glycosylated. In terms of tissue distribution, testis specific.

The protein resides in the cytoplasmic vesicle. It is found in the secretory vesicle. Its subcellular location is the acrosome inner membrane. Functionally, plays a role in acrosome formation and establishment of normal sperm morphology during spermatogenesis. Important for male fertility. This Homo sapiens (Human) protein is Sperm acrosome membrane-associated protein 1 (SPACA1).